Consider the following 545-residue polypeptide: MTINNILWFRHGLRLHDNPSLLEALKSDCVNQSSEAVKLFPIFIFDGESAGTRIVGYNRMKFLLESLADLDRQFRDLGGQLLVFRGDSVTVLRRLFEELNIKKLCYEQDCEPIWKERDDAVAKLCRTMDVRCVENVSHTLWNPIEVIQTNGDIPPLTYQMFLHTVNIIGDPPRPVGAPNFEYVEFGRVPALLASELKLCQQMPAPDDFGIHYDGNARIAFQKWIGGETRALEALGARLKQEEEAFREGYYLPTQAKPEILGPATSMSAALRFGCLSVRMFYWCVHDLFAKVQSNSQFKYPGGHHITGQLIWREYFYTMSVQNPHYGEMERNPICLNIPWYKPEDDSLTRWKEGRTGFPMIDAAMRQLLAEGWLHHILRNITATFLTRGGLWLSWEEGLQHFLKYLLDADWSVCAGNWMWVSSSAFERLLDSSKCTCPIALARRLDPKGDYVKRYLPELANYPAQFVHEPWKASREQQIEYGCVIGEKYPAPMVDLAIVSKRNAHTMASLREKLVDGGSTPPHCRPSDIEEIRQFFWLADDAATEA.

The 138-residue stretch at 3–140 folds into the Photolyase/cryptochrome alpha/beta domain; that stretch reads INNILWFRHG…RCVENVSHTL (138 aa). Residues R237, S265, S267, Q308, H375, 407–409, C413, and N416 contribute to the FAD site; that span reads DAD.

Belongs to the DNA photolyase class-1 family. As to quaternary structure, interacts with tim and per; promoted by light conditions. FAD is required as a cofactor.

It is found in the cytoplasm. The protein resides in the perinuclear region. Its subcellular location is the nucleus. Its function is as follows. Blue light-dependent regulator that is the input of the circadian feedback loop. Has no photolyase activity for cyclobutane pyrimidine dimers or 6-4 photoproducts. Regulation of expression by light suggests a role in photoreception for locomotor activity rhythms. Functions, together with per, as a transcriptional repressor required for the oscillation of peripheral circadian clocks and for the correct specification of clock cells. Genes directly activated by the transcription factors Clock (Clk) and cycle (cyc) are repressed by cry. This Anopheles gambiae (African malaria mosquito) protein is Cryptochrome-1.